Consider the following 989-residue polypeptide: ATP-dependent 6-phosphofructokinase subunit alpha (989 aa).

Residues 1-585 (MPEPSISALS…SYESFLSVSK (585 aa)) form an N-terminal catalytic PFK domain 1 region. ATP contacts are provided by residues Gly220, 283-284 (RS), and 313-316 (GDGS). Asp314 lines the Mg(2+) pocket. Beta-D-fructose 6-phosphate contacts are provided by residues 359-361 (SID), Arg396, 403-405 (MGR), Glu460, Arg487, and 493-496 (HVQR). Asp361 (proton acceptor) is an active-site residue. Positions 586–599 (YDDGSYLVPESSRL) are interdomain linker. The segment at 600 to 989 (NIAIIHVGAP…LSGRLSIRTT (390 aa)) is C-terminal regulatory PFK domain 2. Beta-D-fructose 2,6-bisphosphate is bound by residues Arg670, 727-731 (TVSNN), Arg765, 772-774 (QGG), Glu832, Arg858, 864-867 (HVQQ), and Arg963.

The protein belongs to the phosphofructokinase type A (PFKA) family. ATP-dependent PFK group I subfamily. Eukaryotic two domain clade 'E' sub-subfamily. In terms of assembly, heterododecamer of 4 alpha, 4 beta and 4 gamma chains. The gamma chain bridges the N-terminal halves of the alpha and beta subunits. Mg(2+) is required as a cofactor.

It is found in the cytoplasm. It carries out the reaction beta-D-fructose 6-phosphate + ATP = beta-D-fructose 1,6-bisphosphate + ADP + H(+). Its pathway is carbohydrate degradation; glycolysis; D-glyceraldehyde 3-phosphate and glycerone phosphate from D-glucose: step 3/4. Allosterically activated by ADP, AMP, or fructose 2,6-bisphosphate, and allosterically inhibited by ATP or citrate. Its function is as follows. Catalyzes the phosphorylation of D-fructose 6-phosphate to fructose 1,6-bisphosphate by ATP, the first committing step of glycolysis. Involved in the modulation of glucose-induced microautophagy of peroxisomes independent of its ability to metabolize glucose intermediates. This Komagataella phaffii (strain GS115 / ATCC 20864) (Yeast) protein is ATP-dependent 6-phosphofructokinase subunit alpha (PFK1).